A 119-amino-acid chain; its full sequence is Small ribosomal subunit protein bS6 (119 aa).

Belongs to the bacterial ribosomal protein bS6 family.

Functionally, binds together with bS18 to 16S ribosomal RNA. The chain is Small ribosomal subunit protein bS6 from Buchnera aphidicola subsp. Baizongia pistaciae (strain Bp).